The chain runs to 175 residues: ATP synthase subunit b, chloroplastic (175 aa).

A helical membrane pass occupies residues 21–40 (LLESNVINIIILISLLIYLG).

This sequence belongs to the ATPase B chain family. In terms of assembly, F-type ATPases have 2 components, F(1) - the catalytic core - and F(0) - the membrane proton channel. F(1) has five subunits: alpha(3), beta(3), gamma(1), delta(1), epsilon(1). F(0) has four main subunits: a(1), b(1), b'(1) and c(10-14). The alpha and beta chains form an alternating ring which encloses part of the gamma chain. F(1) is attached to F(0) by a central stalk formed by the gamma and epsilon chains, while a peripheral stalk is formed by the delta, b and b' chains.

It localises to the plastid. It is found in the chloroplast thylakoid membrane. In terms of biological role, f(1)F(0) ATP synthase produces ATP from ADP in the presence of a proton or sodium gradient. F-type ATPases consist of two structural domains, F(1) containing the extramembraneous catalytic core and F(0) containing the membrane proton channel, linked together by a central stalk and a peripheral stalk. During catalysis, ATP synthesis in the catalytic domain of F(1) is coupled via a rotary mechanism of the central stalk subunits to proton translocation. Functionally, component of the F(0) channel, it forms part of the peripheral stalk, linking F(1) to F(0). The protein is ATP synthase subunit b, chloroplastic of Cyanidium caldarium (Red alga).